The primary structure comprises 312 residues: Ribosomal protein L11 methyltransferase (312 aa).

Positions 163, 184, 206, and 248 each coordinate S-adenosyl-L-methionine.

This sequence belongs to the methyltransferase superfamily. PrmA family.

The protein localises to the cytoplasm. It catalyses the reaction L-lysyl-[protein] + 3 S-adenosyl-L-methionine = N(6),N(6),N(6)-trimethyl-L-lysyl-[protein] + 3 S-adenosyl-L-homocysteine + 3 H(+). Methylates ribosomal protein L11. The polypeptide is Ribosomal protein L11 methyltransferase (Clostridium botulinum (strain 657 / Type Ba4)).